The sequence spans 659 residues: Hemocyanin subunit B (659 aa).

The first 18 residues, 1–18 (MVAKWCVLAMCLLVAVGA), serve as a signal peptide directing secretion. Positions 198, 202, and 232 each coordinate Cu cation. N-linked (GlcNAc...) asparagine glycosylation occurs at asparagine 318. Positions 353, 357, and 393 each coordinate Cu cation. Cysteine 562 and cysteine 609 are disulfide-bonded.

The protein belongs to the tyrosinase family. Hemocyanin subfamily. In terms of assembly, 36-chain polymer consisting of 6 hexamers, each of which includes 4 different chains, A, B, C and D. As to expression, hemolymph.

Its subcellular location is the secreted. The protein resides in the extracellular space. Hemocyanins are copper-containing oxygen carriers occurring freely dissolved in the hemolymph of many mollusks and arthropods. This Scutigera coleoptrata (House centipede) protein is Hemocyanin subunit B (HCB).